Reading from the N-terminus, the 308-residue chain is Pantothenate kinase (308 aa).

90-97 (GSVAVGKS) provides a ligand contact to ATP.

Belongs to the prokaryotic pantothenate kinase family.

The protein localises to the cytoplasm. The catalysed reaction is (R)-pantothenate + ATP = (R)-4'-phosphopantothenate + ADP + H(+). It participates in cofactor biosynthesis; coenzyme A biosynthesis; CoA from (R)-pantothenate: step 1/5. The sequence is that of Pantothenate kinase from Sorangium cellulosum (strain So ce56) (Polyangium cellulosum (strain So ce56)).